The following is a 459-amino-acid chain: Argininosuccinate lyase (459 aa).

The protein belongs to the lyase 1 family. Argininosuccinate lyase subfamily.

It localises to the cytoplasm. It catalyses the reaction 2-(N(omega)-L-arginino)succinate = fumarate + L-arginine. It participates in amino-acid biosynthesis; L-arginine biosynthesis; L-arginine from L-ornithine and carbamoyl phosphate: step 3/3. The protein is Argininosuccinate lyase of Staphylococcus aureus (strain bovine RF122 / ET3-1).